The following is a 140-amino-acid chain: Pro-variola growth factor (140 aa).

Residues 1–18 (MSMKYLMLLFAAMIIRSF) form the signal peptide. Residues 19–100 (ANSGNAIETT…SEKPNTTTSY (82 aa)) are Extracellular-facing. Asparagine 34 carries an N-linked (GlcNAc...) asparagine; by host glycan. One can recognise an EGF-like domain in the interval 41 to 81 (AIRLCGPEGDRYCFHGICIHARDIDGMYCRCSHGYTGIRCQ). Disulfide bonds link cysteine 45–cysteine 58, cysteine 53–cysteine 69, and cysteine 71–cysteine 80. Asparagine 95 is a glycosylation site (N-linked (GlcNAc...) asparagine; by host). Residues 101 to 121 (IPSPGIVLVLLVSIIVCCLLF) form a helical membrane-spanning segment. The Cytoplasmic portion of the chain corresponds to 122–140 (VYRFTRRTNKLPLQDMVVP).

It belongs to the orthopoxvirus OPG019 family. Variola growth factor interacts with host EGFR and promotes EGFR dimerization.

It localises to the host membrane. The protein resides in the secreted. Functionally, stimulates cellular proliferation (hyperplasia)and mobility around infected cells to promote rapid and efficient spread of infection. This effect is beneficial for virus replication in vivo, because poxviruses replicate possibly better in proliferating cells than in quiescent cells. Acts by binding host EGFR, inducing its dimerization, autophosphorylation and leading to activation of several cellular pathways regulating cell proliferation or cell survival. The activation by host EGFR of mitogen activated protein kinases (MAPK) and extracellular-signal regulated kinases (ERK) are essential for the positive effect of vaccinia growth factor on poxvirus virulence in vivo. In Variola virus (isolate Human/India/Ind3/1967) (VARV), this protein is Pro-variola growth factor (OPG019).